Consider the following 612-residue polypeptide: Protein MUK1 (612 aa).

Over residues 40-50 (EDQNDNERSSC) the composition is skewed to basic and acidic residues. The segment at 40-66 (EDQNDNERSSCDGDENSTTGERLENNK) is disordered. The span at 55 to 66 (NSTTGERLENNK) shows a compositional bias: polar residues. Residues Ser67, Ser163, Ser185, and Ser245 each carry the phosphoserine modification. In terms of domain architecture, VPS9 spans 273–414 (TEYNKLLNEK…VEGLTKNDFS (142 aa)). The interval 494 to 560 (IRSYTPPHPN…SSASLEHGNR (67 aa)) is disordered. Positions 503–517 (NNTSNNNLHSSNNLN) are enriched in low complexity. Over residues 518-529 (IPRSSSQLSMEL) the composition is skewed to polar residues. Over residues 530–542 (SNRDTTEMSRDGS) the composition is skewed to basic and acidic residues. Low complexity predominate over residues 543-554 (RSTSSSSRSSAS).

It is found in the cytoplasm. In terms of biological role, putative GTPase-activating protein. This chain is Protein MUK1 (MUK1), found in Saccharomyces cerevisiae (strain ATCC 204508 / S288c) (Baker's yeast).